Here is a 394-residue protein sequence, read N- to C-terminus: Ribulose bisphosphate carboxylase large chain (394 aa).

Lys-5 is subject to N6,N6,N6-trimethyllysine. Residues Asn-114 and Thr-164 each contribute to the substrate site. The Proton acceptor role is filled by Lys-166. A substrate-binding site is contributed by Lys-168. Mg(2+) is bound by residues Lys-192, Asp-194, and Glu-195. Lys-192 bears the N6-carboxylysine mark. Residue His-285 is the Proton acceptor of the active site. 3 residues coordinate substrate: Arg-286, His-318, and Ser-370.

It belongs to the RuBisCO large chain family. Type I subfamily. In terms of assembly, heterohexadecamer of 8 large chains and 8 small chains. It depends on Mg(2+) as a cofactor.

The protein localises to the plastid. The protein resides in the chloroplast. The enzyme catalyses 2 (2R)-3-phosphoglycerate + 2 H(+) = D-ribulose 1,5-bisphosphate + CO2 + H2O. It catalyses the reaction D-ribulose 1,5-bisphosphate + O2 = 2-phosphoglycolate + (2R)-3-phosphoglycerate + 2 H(+). Functionally, ruBisCO catalyzes two reactions: the carboxylation of D-ribulose 1,5-bisphosphate, the primary event in carbon dioxide fixation, as well as the oxidative fragmentation of the pentose substrate in the photorespiration process. Both reactions occur simultaneously and in competition at the same active site. The sequence is that of Ribulose bisphosphate carboxylase large chain (rbcL) from Nymphaea odorata (White water lily).